The primary structure comprises 441 residues: Chromosomal replication initiator protein DnaA (441 aa).

The domain I, interacts with DnaA modulators stretch occupies residues 1-80; sequence MQNDVLARWE…MHQEISLQFI (80 aa). Residues 80-102 are domain II; that stretch reads ILAGQEVDQPKPKERSSEETYIN. A domain III, AAA+ region region spans residues 103 to 320; sequence ILNPRYTFDT…GALIRVSAFS (218 aa). Residues G147, G149, K150, and T151 each coordinate ATP. Positions 321–441 are domain IV, binds dsDNA; it reads SLEQRDATPQ…IKELKKRIGE (121 aa).

The protein belongs to the DnaA family. In terms of assembly, oligomerizes as a right-handed, spiral filament on DNA at oriC.

The protein resides in the cytoplasm. Functionally, plays an essential role in the initiation and regulation of chromosomal replication. ATP-DnaA binds to the origin of replication (oriC) to initiate formation of the DNA replication initiation complex once per cell cycle. Binds the DnaA box (a 9 base pair repeat at the origin) and separates the double-stranded (ds)DNA. Forms a right-handed helical filament on oriC DNA; dsDNA binds to the exterior of the filament while single-stranded (ss)DNA is stabiized in the filament's interior. The ATP-DnaA-oriC complex binds and stabilizes one strand of the AT-rich DNA unwinding element (DUE), permitting loading of DNA polymerase. After initiation quickly degrades to an ADP-DnaA complex that is not apt for DNA replication. Binds acidic phospholipids. The polypeptide is Chromosomal replication initiator protein DnaA (Desulforamulus reducens (strain ATCC BAA-1160 / DSM 100696 / MI-1) (Desulfotomaculum reducens)).